We begin with the raw amino-acid sequence, 89 residues long: Acylphosphatase (89 aa).

The Acylphosphatase-like domain occupies 4 to 89; sequence CVRCLIAGRV…IPEIQMFEVR (86 aa). Catalysis depends on residues Arg19 and Asn37.

This sequence belongs to the acylphosphatase family.

The enzyme catalyses an acyl phosphate + H2O = a carboxylate + phosphate + H(+). The sequence is that of Acylphosphatase (acyP) from Nitrosococcus oceani (strain ATCC 19707 / BCRC 17464 / JCM 30415 / NCIMB 11848 / C-107).